The primary structure comprises 153 residues: Protein SprT-like (153 aa).

The region spanning Gln7–Ser145 is the SprT-like domain. Position 67 (His67) interacts with Zn(2+). The active site involves Glu68. Residue His71 coordinates Zn(2+).

This sequence belongs to the SprT family. It depends on Zn(2+) as a cofactor.

Its subcellular location is the cytoplasm. The chain is Protein SprT-like from Enterococcus faecalis (strain ATCC 700802 / V583).